Consider the following 99-residue polypeptide: Small ribosomal subunit protein uS14m (99 aa).

Belongs to the universal ribosomal protein uS14 family.

The protein localises to the mitochondrion. This is Small ribosomal subunit protein uS14m (RPS14) from Oenothera berteroana (Bertero's evening primrose).